A 370-amino-acid polypeptide reads, in one-letter code: tRNA-specific 2-thiouridylase MnmA (370 aa).

ATP contacts are provided by residues 11-18 and Met37; that span reads GMSGGVDS. Positions 97 to 99 are interaction with target base in tRNA; it reads NPD. Residue Cys102 is the Nucleophile of the active site. The cysteines at positions 102 and 199 are disulfide-linked. Gly126 contacts ATP. Positions 149-151 are interaction with tRNA; sequence KDQ. Cys199 (cysteine persulfide intermediate) is an active-site residue. The interaction with tRNA stretch occupies residues 307–308; sequence RY.

Belongs to the MnmA/TRMU family.

It is found in the cytoplasm. The enzyme catalyses S-sulfanyl-L-cysteinyl-[protein] + uridine(34) in tRNA + AH2 + ATP = 2-thiouridine(34) in tRNA + L-cysteinyl-[protein] + A + AMP + diphosphate + H(+). Its function is as follows. Catalyzes the 2-thiolation of uridine at the wobble position (U34) of tRNA, leading to the formation of s(2)U34. The chain is tRNA-specific 2-thiouridylase MnmA from Staphylococcus carnosus (strain TM300).